Here is a 211-residue protein sequence, read N- to C-terminus: tRNA (guanine-N(7)-)-methyltransferase (211 aa).

4 residues coordinate S-adenosyl-L-methionine: Glu44, Asp69, Asp96, and Asp118. Residue Asp118 is part of the active site. Lys122 provides a ligand contact to substrate. The segment at 124-129 (RHEKRR) is interaction with RNA. Substrate contacts are provided by residues Asp154 and 191 to 194 (TEYE).

The protein belongs to the class I-like SAM-binding methyltransferase superfamily. TrmB family.

The enzyme catalyses guanosine(46) in tRNA + S-adenosyl-L-methionine = N(7)-methylguanosine(46) in tRNA + S-adenosyl-L-homocysteine. Its pathway is tRNA modification; N(7)-methylguanine-tRNA biosynthesis. Catalyzes the formation of N(7)-methylguanine at position 46 (m7G46) in tRNA. This is tRNA (guanine-N(7)-)-methyltransferase from Streptococcus pneumoniae (strain JJA).